Consider the following 116-residue polypeptide: Flagellar transcriptional regulator FlhD (116 aa).

Belongs to the FlhD family. As to quaternary structure, homodimer; disulfide-linked. Forms a heterohexamer composed of two FlhC and four FlhD subunits. Each FlhC binds a FlhD dimer, forming a heterotrimer, and a hexamer assembles by dimerization of two heterotrimers.

The protein localises to the cytoplasm. Functions in complex with FlhC as a master transcriptional regulator that regulates transcription of several flagellar and non-flagellar operons by binding to their promoter region. Activates expression of class 2 flagellar genes, including fliA, which is a flagellum-specific sigma factor that turns on the class 3 genes. Also regulates genes whose products function in a variety of physiological pathways. The sequence is that of Flagellar transcriptional regulator FlhD from Escherichia coli O157:H7.